The sequence spans 345 residues: DNA-directed RNA polymerase subunit alpha (345 aa).

The tract at residues 1-233 is alpha N-terminal domain (alpha-NTD); sequence MVRNWCSLIR…KQLQVFVGLH (233 aa). An alpha C-terminal domain (alpha-CTD) region spans residues 256 to 345; sequence LNDILLRHVE…EEMGEIQEEG (90 aa).

It belongs to the RNA polymerase alpha chain family. As to quaternary structure, homodimer. The RNAP catalytic core consists of 2 alpha, 1 beta, 1 beta' and 1 omega subunit. When a sigma factor is associated with the core the holoenzyme is formed, which can initiate transcription.

It catalyses the reaction RNA(n) + a ribonucleoside 5'-triphosphate = RNA(n+1) + diphosphate. DNA-dependent RNA polymerase catalyzes the transcription of DNA into RNA using the four ribonucleoside triphosphates as substrates. The sequence is that of DNA-directed RNA polymerase subunit alpha from Syntrophus aciditrophicus (strain SB).